The primary structure comprises 345 residues: 4-hydroxy-2-oxovalerate aldolase (345 aa).

Residues 8-260 (ITVHDMTLRD…ETGVDVFKIQ (253 aa)) form the Pyruvate carboxyltransferase domain. Position 16 to 17 (16 to 17 (RD)) interacts with substrate. Mn(2+) is bound at residue aspartate 17. The active-site Proton acceptor is the histidine 20. Substrate-binding residues include serine 170 and histidine 199. Histidine 199 and histidine 201 together coordinate Mn(2+). Tyrosine 290 is a binding site for substrate.

The protein belongs to the 4-hydroxy-2-oxovalerate aldolase family.

The catalysed reaction is (S)-4-hydroxy-2-oxopentanoate = acetaldehyde + pyruvate. The polypeptide is 4-hydroxy-2-oxovalerate aldolase (Leptothrix cholodnii (strain ATCC 51168 / LMG 8142 / SP-6) (Leptothrix discophora (strain SP-6))).